A 481-amino-acid polypeptide reads, in one-letter code: Zinc metalloproteinase/disintegrin (481 aa).

Positions 1-20 (MIEVLLVTICLAVFPYQGSS) are cleaved as a signal peptide. Positions 21–189 (IILESGNVND…KKASQLYLTP (169 aa)) are excised as a propeptide. Position 190 is a pyrrolidone carboxylic acid (Glu) (E190). One can recognise a Peptidase M12B domain in the interval 197-392 (RYIKLAIVVD…DNPQCILNAP (196 aa)). 296–299 (RNTI) contacts an L-amino acid tripeptide. 3 cysteine pairs are disulfide-bonded: C308-C387, C349-C371, and C351-C354. Residue H333 coordinates Zn(2+). Residue E334 is part of the active site. The Zn(2+) site is built by H337 and H343. An an L-amino acid tripeptide-binding site is contributed by S357. The propeptide occupies 393–410 (LRTDTVSTPVSGNEFLEA). The region spanning 400-481 (TPVSGNEFLE…ADCPRNGLYG (82 aa)) is the Disintegrin domain. Intrachain disulfides connect C414–C429, C416–C424, C423–C446, C437–C443, C442–C467, and C455–C474. Residues 459–461 (RGD) carry the Cell attachment site motif.

It belongs to the venom metalloproteinase (M12B) family. P-II subfamily. P-IIa sub-subfamily. In terms of assembly, monomer. The cofactor is Zn(2+). The N-terminus is blocked. In terms of tissue distribution, expressed by the venom gland.

Its subcellular location is the secreted. With respect to regulation, inhibited by EDTA and 1,10-phenanthroline. Is also inhibited by endogenous tripeptide inhibitors pyroGlu-Asn-Trp, pyroGlu-Gln-Trp, and pyroGlu-Lys-Trp. Potent fibrinogenolytic protease which cleaves mainly the Aalpha chain of fibrinogen (FGA) and slightly the Bbeta (FGB) and the gamma (FGG) chains. May possess hemorrhagic activity. Compared to other SVMP, the substrate-binding pocket is relatively shallow. Is less susceptible to tripeptide inhibitors than TM-1 (AC U3KRG1) and TM-2. In terms of biological role, inhibits platelet aggregation induced by ADP, thrombin, platelet-activating factor and collagen. Acts by inhibiting fibrinogen interaction with platelet receptors GPIIb/GPIIIa (ITGA2B/ITGB3). This Protobothrops mucrosquamatus (Taiwan habu) protein is Zinc metalloproteinase/disintegrin.